Reading from the N-terminus, the 196-residue chain is Guanylate kinase (196 aa).

Positions 1-24 are disordered; the sequence is MPVESGAGNDQPKRLTVLSGPSGV. The Guanylate kinase-like domain occupies 13 to 191; the sequence is KRLTVLSGPS…VCDELLALIA (179 aa). 20 to 27 contributes to the ATP binding site; it reads GPSGVGKS.

The protein belongs to the guanylate kinase family.

It localises to the cytoplasm. It carries out the reaction GMP + ATP = GDP + ADP. Essential for recycling GMP and indirectly, cGMP. This chain is Guanylate kinase, found in Thermobifida fusca (strain YX).